The following is a 145-amino-acid chain: Large ribosomal subunit protein bL17 (145 aa).

This sequence belongs to the bacterial ribosomal protein bL17 family. Part of the 50S ribosomal subunit. Contacts protein L32.

The chain is Large ribosomal subunit protein bL17 from Francisella tularensis subsp. holarctica (strain FTNF002-00 / FTA).